A 241-amino-acid chain; its full sequence is Kynurenine formamidase (241 aa).

The HGGXW motif lies at 23–27 (HGGAW). The active-site Nucleophile is the serine 95. Catalysis depends on residues aspartate 191 and histidine 223.

The protein belongs to the kynurenine formamidase family. As to quaternary structure, homodimer.

The catalysed reaction is N-formyl-L-kynurenine + H2O = L-kynurenine + formate + H(+). It participates in amino-acid degradation; L-tryptophan degradation via kynurenine pathway; L-kynurenine from L-tryptophan: step 2/2. Functionally, catalyzes the hydrolysis of N-formyl-L-kynurenine to L-kynurenine, the second step in the kynurenine pathway of tryptophan degradation. Kynurenine may be further oxidized to nicotinic acid, NAD(H) and NADP(H). Required for elimination of toxic metabolites. This Eremothecium gossypii (strain ATCC 10895 / CBS 109.51 / FGSC 9923 / NRRL Y-1056) (Yeast) protein is Kynurenine formamidase.